A 742-amino-acid polypeptide reads, in one-letter code: Protein-lysine N-methyltransferase SMYD4 (742 aa).

An S-adenosyl-L-methionine-binding site is contributed by 110-112; that stretch reads RSA. The SET domain maps to 230–569; it reads SSLSLNFSTE…SGQEIFHCYG (340 aa). 8 residues coordinate Zn(2+): C295, C298, C308, C311, C317, C321, H330, and C334. The MYND-type zinc finger occupies 295-334; the sequence is CHHCLKQLLASIPCCGCSYAKYCSQNCADVAWEQYHRTEC. Residues N418, 534–535, and Y568 contribute to the S-adenosyl-L-methionine site; that span reads NH.

Belongs to the class V-like SAM-binding methyltransferase superfamily.

The protein localises to the nucleus. Its subcellular location is the cytoplasm. The enzyme catalyses L-lysyl-[protein] + S-adenosyl-L-methionine = N(6)-methyl-L-lysyl-[protein] + S-adenosyl-L-homocysteine + H(+). In terms of biological role, protein-lysine N-methyltransferase. Monomethylates PRMT5, modulating its transcriptional activity. May also act as a histone methyltransferase. Plays a critical role in cardiac development. Acts as a key epigenetic regulator of gene expression during cardiac development via its dual activities as a methyltransferase and negative regulator of HDAC1. This chain is Protein-lysine N-methyltransferase SMYD4 (SMYD4), found in Gallus gallus (Chicken).